Here is a 222-residue protein sequence, read N- to C-terminus: Protein GrpE (222 aa).

This sequence belongs to the GrpE family. As to quaternary structure, homodimer.

It localises to the cytoplasm. Its function is as follows. Participates actively in the response to hyperosmotic and heat shock by preventing the aggregation of stress-denatured proteins, in association with DnaK and GrpE. It is the nucleotide exchange factor for DnaK and may function as a thermosensor. Unfolded proteins bind initially to DnaJ; upon interaction with the DnaJ-bound protein, DnaK hydrolyzes its bound ATP, resulting in the formation of a stable complex. GrpE releases ADP from DnaK; ATP binding to DnaK triggers the release of the substrate protein, thus completing the reaction cycle. Several rounds of ATP-dependent interactions between DnaJ, DnaK and GrpE are required for fully efficient folding. This chain is Protein GrpE, found in Bartonella bacilliformis (strain ATCC 35685 / KC583 / Herrer 020/F12,63).